A 219-amino-acid polypeptide reads, in one-letter code: GPI ethanolamine phosphate transferase, stabilizing subunit (219 aa).

6 helical membrane passes run Tyr11 to Leu31, Thr42 to Val62, Tyr86 to Ile106, Phe113 to Pro133, Leu155 to Leu175, and Thr189 to Trp209.

The protein belongs to the PIGF family. As to quaternary structure, part of the ethanolamine phosphate transferase 3 complex composed by PIGO and PIGF. Part of the ethanolamine phosphate transferase 2 complex with PIGG. PIGF is required to stabilize PIGG and PIGO.

It localises to the endoplasmic reticulum membrane. It participates in glycolipid biosynthesis; glycosylphosphatidylinositol-anchor biosynthesis. Stabilizing subunit of the ethanolamine phosphate transferase 3 and ethanolamine phosphate transferase 2 complexes that sequentially transfer an ethanolamine phosphate (EtNP) from a phosphatidylethanolamine (PE) to the 6-OH position of the third alpha-1,2-linked mannose and the second alpha-1,6-linked mannose of the alpha-D-Man-(1-&gt;2)-alpha-D-Man-(1-&gt;6)-2-PEtn-alpha-D-Man-(1-&gt;4)-alpha-D-GlcN-(1-&gt;6)-(1-radyl,2-acyl-sn-glycero-3-phospho)-2-acyl-inositol (also termed H6) intermediate to generate a 6-PEtn-alpha-D-Man-(1-&gt;2)-6-PEtn-alpha-D-Man-(1-&gt;6)-2-PEtn-alpha-D-Man-(1-&gt;4)-alpha-D-GlcN-(1-&gt;6)-(1-radyl,2-acyl-sn-glycero-3-phospho)-2-acyl-inositol (also termed H8). Participates in the tenth and eleventh steps of the glycosylphosphatidylinositol-anchor biosynthesis, in association with PIGO and PIGG, respectively. The polypeptide is GPI ethanolamine phosphate transferase, stabilizing subunit (Homo sapiens (Human)).